A 178-amino-acid chain; its full sequence is Caveolin-1 (178 aa).

Ser2 bears the N-acetylserine mark. The residue at position 2 (Ser2) is a Phosphoserine. The tract at residues 2–94 (SGGKYVDSEG…WKASFTTFTV (93 aa)) is required for homooligomerization. Residues 2 to 104 (SGGKYVDSEG…TKYWFYRLLS (103 aa)) are Cytoplasmic-facing. The residue at position 5 (Lys5) is an N6-acetyllysine; alternate. A Glycyl lysine isopeptide (Lys-Gly) (interchain with G-Cter in ubiquitin); alternate cross-link involves residue Lys5. Position 6 is a phosphotyrosine (Tyr6). A Phosphoserine modification is found at Ser9. Tyr14 carries the post-translational modification Phosphotyrosine; by ABL1. Tyr25 carries the phosphotyrosine modification. Residues Lys26 and Lys30 each participate in a glycyl lysine isopeptide (Lys-Gly) (interchain with G-Cter in ubiquitin) cross-link. Ser37 carries the phosphoserine modification. Residues Lys39, Lys47, and Lys57 each participate in a glycyl lysine isopeptide (Lys-Gly) (interchain with G-Cter in ubiquitin) cross-link. The interval 82–94 (DGIWKASFTTFTV) is interaction with CAVIN3. Residues 105–125 (ALFGIPMALIWGIYFAILSFL) constitute an intramembrane region (helical). Residues 126-178 (HIWAVVPCIKSFLIEIQCISRVYSIYIHTVCDPLFEAIGKIFSNVRISLQKEI) lie on the Cytoplasmic side of the membrane. The interval 131–142 (VPCIKSFLIEIQ) is interacts with SPRY1, SPRY2, SPRY3 and SPRY4. Residues Cys133, Cys143, and Cys156 are each lipidated (S-palmitoyl cysteine). The segment at 149–160 (SIYIHTVCDPLF) is interacts with SPRY1, SPRY2, and SPRY4. An interacts with SPRY1, SPRY2, SPRY3 and SPRY4 region spans residues 167 to 178 (FSNVRISLQKEI).

It belongs to the caveolin family. As to quaternary structure, homooligomer. Interacts with GLIPR2. Interacts with NOSTRIN. Interacts with SNAP25 and STX1A. Interacts (via the N-terminus) with DPP4; the interaction is direct. Interacts with CTNNB1, CDH1 and JUP. Interacts with PACSIN2; this interaction induces membrane tubulation. Interacts with SLC7A9. Interacts with BMX and BTK. Interacts with TGFBR1. Interacts with CAVIN3 (via leucine-zipper domain) in a cholesterol-sensitive manner. Interacts with CAVIN1. Interacts with EHD2 in a cholesterol-dependent manner. Forms a ternary complex with UBXN6 and VCP; mediates CAV1 targeting to lysosomes for degradation. Interacts with ABCG1; this interaction regulates ABCG1-mediated cholesterol efflux. Interacts with NEU3; this interaction enhances NEU3 sialidase activity within caveola. Interacts (via C-terminus) with SPRY1, SPRY2 (via C-terminus), SPRY3, and SPRY4. Interacts with IGFBP5; this interaction allows trafficking of IGFBP5 from the plasma membrane to the nucleus. Post-translationally, phosphorylated at Tyr-14 by ABL1 in response to oxidative stress. Ubiquitinated. Undergo monoubiquitination and multi- and/or polyubiquitination. Monoubiquitination of N-terminal lysines promotes integration in a ternary complex with UBXN6 and VCP which promotes oligomeric CAV1 targeting to lysosomes for degradation. Ubiquitinated by ZNRF1; leading to degradation and modulation of the TLR4-mediated immune response.

The protein resides in the golgi apparatus membrane. Its subcellular location is the cell membrane. It localises to the membrane. The protein localises to the caveola. It is found in the membrane raft. In terms of biological role, may act as a scaffolding protein within caveolar membranes. Forms a stable heterooligomeric complex with CAV2 that targets to lipid rafts and drives caveolae formation. Mediates the recruitment of CAVIN proteins (CAVIN1/2/3/4) to the caveolae. Interacts directly with G-protein alpha subunits and can functionally regulate their activity. Involved in the costimulatory signal essential for T-cell receptor (TCR)-mediated T-cell activation. Its binding to DPP4 induces T-cell proliferation and NF-kappa-B activation in a T-cell receptor/CD3-dependent manner. Recruits CTNNB1 to caveolar membranes and may regulate CTNNB1-mediated signaling through the Wnt pathway. Negatively regulates TGFB1-mediated activation of SMAD2/3 by mediating the internalization of TGFBR1 from membrane rafts leading to its subsequent degradation. Binds 20(S)-hydroxycholesterol (20(S)-OHC). The chain is Caveolin-1 (CAV1) from Aotus nancymaae (Ma's night monkey).